Reading from the N-terminus, the 250-residue chain is Biosynthetic peptidoglycan transglycosylase (250 aa).

The helical transmembrane segment at 15–35 (AVLLFFVSSLGFVLLYRFVPV) threads the bilayer.

The protein belongs to the glycosyltransferase 51 family.

The protein resides in the cell inner membrane. It catalyses the reaction [GlcNAc-(1-&gt;4)-Mur2Ac(oyl-L-Ala-gamma-D-Glu-L-Lys-D-Ala-D-Ala)](n)-di-trans,octa-cis-undecaprenyl diphosphate + beta-D-GlcNAc-(1-&gt;4)-Mur2Ac(oyl-L-Ala-gamma-D-Glu-L-Lys-D-Ala-D-Ala)-di-trans,octa-cis-undecaprenyl diphosphate = [GlcNAc-(1-&gt;4)-Mur2Ac(oyl-L-Ala-gamma-D-Glu-L-Lys-D-Ala-D-Ala)](n+1)-di-trans,octa-cis-undecaprenyl diphosphate + di-trans,octa-cis-undecaprenyl diphosphate + H(+). Its pathway is cell wall biogenesis; peptidoglycan biosynthesis. Its function is as follows. Peptidoglycan polymerase that catalyzes glycan chain elongation from lipid-linked precursors. The sequence is that of Biosynthetic peptidoglycan transglycosylase from Bdellovibrio bacteriovorus (strain ATCC 15356 / DSM 50701 / NCIMB 9529 / HD100).